The sequence spans 1288 residues: Contactin-associated protein-like 3B (1288 aa).

An N-terminal signal peptide occupies residues 1–25; sequence MASVAWAVLKVLLLLPTQTWSPVGA. The disordered stretch occupies residues 23 to 61; sequence VGAGNPPDCDSPLASALPRSSFSSSSELSSSHGPGFSRL. At 26 to 1245 the chain is on the extracellular side; that stretch reads GNPPDCDSPL…LVNADRRDSA (1220 aa). Residues 31–177 form the F5/8 type C domain; the sequence is CDSPLASALP…IGMRIEVYGC (147 aa). 6 disulfide bridges follow: C31-C177, C332-C364, C513-C545, C551-C562, C556-C571, and C573-C583. Residues 33–59 are compositionally biased toward low complexity; that stretch reads SPLASALPRSSFSSSSELSSSHGPGFS. Laminin G-like domains lie at 183–364 and 370–545; these read VVYF…SFSC and VPVT…IDSC. Residue N359 is glycosylated (N-linked (GlcNAc...) asparagine). Residues 547–584 form the EGF-like 1 domain; the sequence is ITDRCLPSYCEHGGECSQSWDTFSCDCLGTGYTGETCH. The Fibrinogen C-terminal domain maps to 585–792; that stretch reads SSLYEQSCEA…LLCRGDKSFW (208 aa). The N-linked (GlcNAc...) asparagine glycan is linked to N706. The region spanning 793–958 is the Laminin G-like 3 domain; it reads NSASFNTETS…TVTPGVEPGC (166 aa). Cystine bridges form between C931–C958, C962–C975, C969–C984, C986–C996, and C1167–C1203. One can recognise an EGF-like 2 domain in the interval 959–997; it reads AGHCSTYGHLCRNGGRCREKRRGVTCDCAFSAYDGPFCS. The 188-residue stretch at 1016–1203 folds into the Laminin G-like 4 domain; sequence EHYTLSENSS…RGHVAPMARC (188 aa). A disordered region spans residues 1215 to 1236; sequence ELAPRLAGGAGRSGPVDEGEPL. A helical membrane pass occupies residues 1246–1266; it reads VIGGVIAVEIFILLCITAIAI. The Cytoplasmic portion of the chain corresponds to 1267–1288; sequence RIYQQRKLRKENESKVSKKEEC.

The protein belongs to the neurexin family.

It localises to the membrane. The sequence is that of Contactin-associated protein-like 3B (CNTNAP3B) from Homo sapiens (Human).